A 223-amino-acid chain; its full sequence is Putative synaptogyrin-2 like protein (223 aa).

Methionine 1 carries the post-translational modification N-acetylmethionine. Serine 3 is subject to Phosphoserine. The 151-residue stretch at 20–170 (FLTQPQVVAR…LASLTYQRYK (151 aa)) folds into the MARVEL domain. 4 helical membrane passes run 26–46 (VVAR…IYGE), 71–91 (GSAI…DAYF), 104–124 (VIGD…GFCF), and 146–166 (AAIT…SLTY). Residues 197–223 (ASVDNYQQPPFTQNAETTEGYQPPPVY) are disordered. The span at 200–216 (DNYQQPPFTQNAETTEG) shows a compositional bias: polar residues.

The protein belongs to the synaptogyrin family.

It is found in the membrane. The sequence is that of Putative synaptogyrin-2 like protein from Homo sapiens (Human).